We begin with the raw amino-acid sequence, 114 residues long: T cell receptor beta variable 5-8 (114 aa).

A signal peptide spans 1–21; it reads MGPRLLFWALLCLLGTGPVEA. Residues 22-114 form the Ig-like domain; it reads GVTQSPTHLI…SALYLCASSL (93 aa). A disulfide bridge links Cys-42 with Cys-110. The N-linked (GlcNAc...) asparagine glycan is linked to Asn-90.

In terms of assembly, alpha-beta TR is a heterodimer composed of an alpha and beta chain; disulfide-linked. The alpha-beta TR is associated with the transmembrane signaling CD3 coreceptor proteins to form the TR-CD3 (TcR or TCR). The assembly of alpha-beta TR heterodimers with CD3 occurs in the endoplasmic reticulum where a single alpha-beta TR heterodimer associates with one CD3D-CD3E heterodimer, one CD3G-CD3E heterodimer and one CD247 homodimer forming a stable octameric structure. CD3D-CD3E and CD3G-CD3E heterodimers preferentially associate with TR alpha and TR beta chains, respectively. The association of the CD247 homodimer is the last step of TcR assembly in the endoplasmic reticulum and is required for transport to the cell surface.

Its subcellular location is the cell membrane. In terms of biological role, v region of the variable domain of T cell receptor (TR) beta chain that participates in the antigen recognition. Alpha-beta T cell receptors are antigen specific receptors which are essential to the immune response and are present on the cell surface of T lymphocytes. Recognize peptide-major histocompatibility (MH) (pMH) complexes that are displayed by antigen presenting cells (APC), a prerequisite for efficient T cell adaptive immunity against pathogens. Binding of alpha-beta TR to pMH complex initiates TR-CD3 clustering on the cell surface and intracellular activation of LCK that phosphorylates the ITAM motifs of CD3G, CD3D, CD3E and CD247 enabling the recruitment of ZAP70. In turn ZAP70 phosphorylates LAT, which recruits numerous signaling molecules to form the LAT signalosome. The LAT signalosome propagates signal branching to three major signaling pathways, the calcium, the mitogen-activated protein kinase (MAPK) kinase and the nuclear factor NF-kappa-B (NF-kB) pathways, leading to the mobilization of transcription factors that are critical for gene expression and essential for T cell growth and differentiation. The T cell repertoire is generated in the thymus, by V-(D)-J rearrangement. This repertoire is then shaped by intrathymic selection events to generate a peripheral T cell pool of self-MH restricted, non-autoaggressive T cells. Post-thymic interaction of alpha-beta TR with the pMH complexes shapes TR structural and functional avidity. This Homo sapiens (Human) protein is T cell receptor beta variable 5-8.